We begin with the raw amino-acid sequence, 192 residues long: MASKGPSASASPENSSAGGPSGSSNGAGESGGQDSTFECNICLDTAKDAVISLCGHLFCWPCLHQWLETRPNRQVCPVCKAGISRDKVIPLYGRGSTGQQDPREKTPPRPQGQRPEPENRGGFQGFGFGDGGFQMSFGIGAFPFGIFATAFNINDGRPPPAVPGTPQYVDEQFLSRLFLFVALVIMFWLLIA.

The segment covering Met1–Ala27 has biased composition (low complexity). The disordered stretch occupies residues Met1–Ser30. Over Met1 to Asp130 the chain is Cytoplasmic. Positions Glu29–Lys80 are required for ubiquitin ligase activity and protection against ER stress-induced cell death. The segment at Cys39 to Lys80 adopts an RING-type zinc-finger fold. Residues Pro90–Phe123 are disordered. Residues Gly131–Phe151 form a helical membrane-spanning segment. The Mitochondrial intermembrane segment spans residues Asn152–Glu171. A helical membrane pass occupies residues Gln172–Ala192.

As to quaternary structure, interacts with ATG5 and BNIP1. In terms of tissue distribution, ubiquitously expressed.

Its subcellular location is the mitochondrion outer membrane. It localises to the endoplasmic reticulum membrane. The catalysed reaction is S-ubiquitinyl-[E2 ubiquitin-conjugating enzyme]-L-cysteine + [acceptor protein]-L-lysine = [E2 ubiquitin-conjugating enzyme]-L-cysteine + N(6)-ubiquitinyl-[acceptor protein]-L-lysine.. It participates in protein modification; protein ubiquitination. E3 ubiquitin-protein ligase that regulates selective mitochondrial autophagy by mediating 'Lys-63'-linked polyubiquitination of BNIP1. Acts in the endoplasmic reticulum (ER)-associated degradation (ERAD) pathway, which targets misfolded proteins that accumulate in the endoplasmic reticulum (ER) for ubiquitination and subsequent proteasome-mediated degradation. Protects cells from ER stress-induced apoptosis. Responsible for the cotranslational ubiquitination and degradation of CFTR in the ERAD pathway. Also acts as a regulator of the innate antiviral response by catalyzing 'Lys-27'-linked polyubiquitination of CGAS at 'Lys-173' and 'Lys-384', thereby promoting CGAS cyclic GMP-AMP synthase activity. Preferentially associates with the E2 enzymes UBE2J1 and UBE2J2. In Homo sapiens (Human), this protein is E3 ubiquitin-protein ligase RNF185.